A 329-amino-acid chain; its full sequence is Phosphatidylcholine:ceramide cholinephosphotransferase 3 (329 aa).

Residues 1-26 are Cytoplasmic-facing; it reads MAVPPVEMYSGSFWNRMRKPLPLRTQ. Residues 27–47 form a helical membrane-spanning segment; the sequence is VIRFTVVFVIVSFILAVALQI. Topologically, residues 48 to 74 are extracellular; sequence THERMPDPKVTKPLPDLGFELLTKVPG. Residues 75 to 95 traverse the membrane as a helical segment; that stretch reads MYVLADCCIGFLNILSVFTAF. Residues 96–147 are Cytoplasmic-facing; that stretch reads KLYLLHRHCVGSGEPELPCNIPGVSRFFLSVWLCKENCRIELRNIHTIAWIR. A helical transmembrane segment spans residues 148–168; that stretch reads FITSYALLLLFRSAVIVMTSL. The Extracellular segment spans residues 169-211; it reads PAPDDLCQNPPKIENPVKNVILTVLTAGAGSIHCGDLMYSGHT. The chain crosses the membrane as a helical span at residues 212–232; sequence VILTLHLMFHWIYGAMVHWSF. Residue Arg-233 is a topological domain, cytoplasmic. A helical transmembrane segment spans residues 234 to 254; it reads PVVTVVAIFGYYCIVASRFHY. At 255-257 the chain is on the extracellular side; sequence TDD. The chain crosses the membrane as a helical span at residues 258–278; the sequence is VLVAIYLTIATFIAVGHNADG. Over 279-329 the chain is Cytoplasmic; it reads APWQLQLFIRWWPCCGANSREVTEDSQPVMVAFKSEAAGQSSRKVVDERNH.

It belongs to the sphingomyelin synthase family.

It localises to the membrane. The enzyme catalyses an N-acylsphing-4-enine + a 1,2-diacyl-sn-glycero-3-phosphocholine = a sphingomyelin + a 1,2-diacyl-sn-glycerol. The catalysed reaction is an N-acylsphinganine + a 1,2-diacyl-sn-glycero-3-phosphocholine = an N-acylsphinganine-1-phosphocholine + a 1,2-diacyl-sn-glycerol. It carries out the reaction an N-acylsphing-4-enine + a 1,2-diacyl-sn-glycero-3-phosphoethanolamine = an N-acylsphing-4-enine 1-phosphoethanolamine + a 1,2-diacyl-sn-glycerol. It catalyses the reaction an N-acylsphinganine + a 1,2-diacyl-sn-glycero-3-phosphoethanolamine = an N-acylsphinganine-1-phosphoethanolamine + a 1,2-diacyl-sn-glycerol. Bifunctional sphingomyelin (SM)/ethanolamine phosphorylceramide (EPC) synthase with minimal inositol phosphorylceramide (IPC) synthase activity. Specificity is likely to be defined by residues in the lumenal catalytic domain that interact with the polar head groups of the phospholipid donors. SM is synthesized by both stages of the parasite life cycle, bloodstream forms (BSF) and procyclic forms (PCF), by transferring the phosphocholine from a 1,2-diacyl-sn-glycero-3-phosphocholine to an N-acylsphing-4-enine (ceramide) or an N-acylsphinganine (dihydroceramide). Similarly, EPC is synthesized by transferring phosphoethanolamine from a 1,2-diacyl-sn-glycero-3-phosphoethanolamine to ceramide or dihydroceramide by BSF and PCF, while IPC is confined to PCF. The ceramide/dihydroceramide ratios are skewed towards dihydroceramide in PCF parasites and ceramide in BSF parasites, this is likely due to differential expression and/or regulation of dihydroceramide desaturase, the enzyme responsible for converting dihydroceramide to ceramide. The sequence is that of Phosphatidylcholine:ceramide cholinephosphotransferase 3 from Trypanosoma brucei brucei.